Consider the following 222-residue polypeptide: Protein-L-isoaspartate O-methyltransferase (222 aa).

The active site involves Ser72.

It belongs to the methyltransferase superfamily. L-isoaspartyl/D-aspartyl protein methyltransferase family.

The protein resides in the cytoplasm. It catalyses the reaction [protein]-L-isoaspartate + S-adenosyl-L-methionine = [protein]-L-isoaspartate alpha-methyl ester + S-adenosyl-L-homocysteine. Catalyzes the methyl esterification of L-isoaspartyl residues in peptides and proteins that result from spontaneous decomposition of normal L-aspartyl and L-asparaginyl residues. It plays a role in the repair and/or degradation of damaged proteins. The protein is Protein-L-isoaspartate O-methyltransferase of Picosynechococcus sp. (strain ATCC 27264 / PCC 7002 / PR-6) (Agmenellum quadruplicatum).